We begin with the raw amino-acid sequence, 354 residues long: Allantoicase (354 aa).

It belongs to the allantoicase family.

The catalysed reaction is allantoate + H2O = (S)-ureidoglycolate + urea. It participates in nitrogen metabolism; (S)-allantoin degradation; (S)-ureidoglycolate from allantoate (aminidohydrolase route): step 1/1. Utilization of purines as secondary nitrogen sources, when primary sources are limiting. The chain is Allantoicase (alc-1) from Neurospora crassa (strain ATCC 24698 / 74-OR23-1A / CBS 708.71 / DSM 1257 / FGSC 987).